We begin with the raw amino-acid sequence, 530 residues long: Na(+)/H(+) antiporter NhaB (530 aa).

Transmembrane regions (helical) follow at residues 23–43 (VAIIAFLIINPIVFFFINPFL), 45–65 (GWLLVVEFIFTLAMALKCYPL), 90–110 (LVANIEVLLLLVFMVAGIYFM), 113–133 (LLLFIFTKILLGIRSKVLLSI), 140–160 (AFLSAFLDALTVIAVIISVAV), 205–225 (LLMHAGVGTALGGVTTMVGEP), 238–258 (FGEFLLRMAPVTVPVFIAGML), 308–328 (IAVWLIVGLALHLAAVGLIGL), 351–371 (EEALPFTALLAVFFSIVAVII), 451–471 (ATPNGQAAFLFLLTSALAPLI), and 479–499 (VIMAFPYTLALSLVGFIGIMF).

It belongs to the NhaB Na(+)/H(+) (TC 2.A.34) antiporter family.

It localises to the cell inner membrane. The catalysed reaction is 2 Na(+)(in) + 3 H(+)(out) = 2 Na(+)(out) + 3 H(+)(in). Functionally, na(+)/H(+) antiporter that extrudes sodium in exchange for external protons. This is Na(+)/H(+) antiporter NhaB from Vibrio cholerae serotype O1 (strain ATCC 39541 / Classical Ogawa 395 / O395).